The following is a 41-amino-acid chain: Hadrurin (41 aa).

It belongs to the non-disulfide-bridged peptide (NDBP) superfamily. Long chain multifunctional peptide (group 2) family. As to expression, expressed by the venom gland.

It localises to the secreted. In terms of biological role, antimicrobial activity against S.typhimurium, K.pneumoniae, E.cloacae, P.aeruginosa, E.coli and S.marcescens. Also shows hemolytic activity when tested in human erythrocytes. In Hoffmannihadrurus aztecus (Mexican scorpion), this protein is Hadrurin.